The chain runs to 332 residues: Probable thc operon regulatory protein (332 aa).

The 102-residue stretch at 227–328 (RLAVDYLEAH…GVSPSEDLRT (102 aa)) folds into the HTH araC/xylS-type domain. 2 DNA-binding regions (H-T-H motif) span residues 244 to 265 (AQVA…QNSL) and 295 to 318 (VTEI…KQTF).

Probably involved in the positive regulation of the thc operon for the degradation of the thiocarbamate herbicide EPTC. The polypeptide is Probable thc operon regulatory protein (thcR) (Rhodococcus erythropolis (Arthrobacter picolinophilus)).